Consider the following 604-residue polypeptide: Baculoviral IAP repeat-containing protein 3 (604 aa).

The BIR 1 repeat unit spans residues Glu-29–Ile-96. At Arg-130 the chain carries Omega-N-methylarginine. At Ser-140 the chain carries Phosphoserine. BIR repeat units lie at residues Glu-169–Val-235 and Leu-255–Leu-322. Zn(2+)-binding residues include Cys-292, Cys-295, His-312, and Cys-319. Positions Arg-439–Gln-529 constitute a CARD domain. The RING-type zinc finger occupies Cys-557–Arg-592.

The protein belongs to the IAP family. In terms of assembly, interacts with PRSS25; the interaction inhibits apoptotic suppressor activity. The BIR motifs region interacts with TNF receptor associated factors 1 and 2 (TRAF1 and TRAF2) to form a heteromeric complex, which is then recruited to the tumor necrosis factor receptor 2 (TNFR2). Interaction with TRAF2 is required for ubiquitination of IKBKE, degradation of NFKBIA and activation of NF-kappa-B. Interacts with RIP1, RIP2, RIP3, RIP4 and USP19. Auto-ubiquitinated and degraded by the proteasome in apoptotic cells.

It is found in the cytoplasm. Its subcellular location is the nucleus. The catalysed reaction is S-ubiquitinyl-[E2 ubiquitin-conjugating enzyme]-L-cysteine + [acceptor protein]-L-lysine = [E2 ubiquitin-conjugating enzyme]-L-cysteine + N(6)-ubiquitinyl-[acceptor protein]-L-lysine.. With respect to regulation, USP19 regulates the stability of BIRC3/c-IAP2 by preventing its ubiquitination. Its function is as follows. Multi-functional protein which regulates not only caspases and apoptosis, but also modulates inflammatory signaling and immunity, mitogenic kinase signaling and cell proliferation, as well as cell invasion and metastasis. Acts as an E3 ubiquitin-protein ligase regulating NF-kappa-B signaling and regulates both canonical and non-canonical NF-kappa-B signaling by acting in opposite directions: acts as a positive regulator of the canonical pathway and suppresses constitutive activation of non-canonical NF-kappa-B signaling. The target proteins for its E3 ubiquitin-protein ligase activity include: RIPK1, RIPK2, RIPK3, RIPK4, CASP3, CASP7, CASP8, IKBKE, TRAF1, and BCL10. Acts as an important regulator of innate immune signaling via regulation of Toll-like receptors (TLRs), Nodlike receptors (NLRs) and RIG-I like receptors (RLRs), collectively referred to as pattern recognition receptors (PRRs). Protects cells from spontaneous formation of the ripoptosome, a large multi-protein complex that has the capability to kill cancer cells in a caspase-dependent and caspase-independent manner. Suppresses ripoptosome formation by ubiquitinating RIPK1 and CASP8. This is Baculoviral IAP repeat-containing protein 3 (BIRC3) from Canis lupus familiaris (Dog).